Consider the following 358-residue polypeptide: N-acylethanolamine-hydrolyzing acid amidase (358 aa).

A signal peptide spans 1–26 (MQGTGHPVRPVLELLLLLLLLAGVGG). N-linked (GlcNAc...) asparagine glycosylation is found at asparagine 39 and asparagine 108. Residue cysteine 127 is the Nucleophile of the active site. N-linked (GlcNAc...) asparagine glycosylation is found at asparagine 310, asparagine 334, and asparagine 356.

Belongs to the acid ceramidase family. In terms of assembly, heterodimer of an alpha and a beta subunit, produced by autocatalytic cleavage. Post-translationally, N-glycosylated. Tunicamycin treatment causes a reduction in specific activity against N-palmitoylethanolamine. In terms of processing, autoproteolytic cleavage at pH 4.5 gives rise to the alpha and beta subunit. Cleavage gives rise to a conformation change that activates the enzyme. The same catalytic Cys residue mediates the autoproteolytic cleavage and subsequent hydrolysis of lipid substrates.

It localises to the lysosome. Its subcellular location is the membrane. It carries out the reaction N-hexadecanoylethanolamine + H2O = ethanolamine + hexadecanoate. It catalyses the reaction an N-(long-chain fatty acyl)ethanolamine + H2O = a long-chain fatty acid + ethanolamine. The enzyme catalyses N-dodecanoylethanolamine + H2O = dodecanoate + ethanolamine. The catalysed reaction is N-tetradecanoylethanolamine + H2O = tetradecanoate + ethanolamine. It carries out the reaction an N-acylsphing-4-enine + H2O = sphing-4-enine + a fatty acid. It catalyses the reaction N-hexadecanoylsphing-4-enine + H2O = sphing-4-enine + hexadecanoate. The enzyme catalyses N-dodecanoylsphing-4-enine + H2O = dodecanoate + sphing-4-enine. It functions in the pathway lipid metabolism; fatty acid metabolism. In terms of biological role, degrades bioactive fatty acid amides to their corresponding acids, with the following preference: N-palmitoylethanolamine &gt; N-myristoylethanolamine &gt; N-stearoylethanolamine &gt; N-oleoylethanolamine &gt; N-linoleoylethanolamine &gt; N-arachidonoylethanolamine. This is N-acylethanolamine-hydrolyzing acid amidase from Oryctolagus cuniculus (Rabbit).